Reading from the N-terminus, the 231-residue chain is Transmembrane protein 225 (231 aa).

Residues Met-1–Asn-13 are Cytoplasmic-facing. A helical transmembrane segment spans residues Ile-14–Val-34. Residues Glu-35 to Met-71 are Extracellular-facing. The chain crosses the membrane as a helical span at residues Met-72–Ile-92. The Cytoplasmic portion of the chain corresponds to Ser-93 to His-99. A helical transmembrane segment spans residues Leu-100 to Tyr-120. At His-121 to Trp-139 the chain is on the extracellular side. Residues Ile-140–Ile-160 traverse the membrane as a helical segment. The Cytoplasmic portion of the chain corresponds to Gln-161–Leu-231. The RVxF motif lies at Arg-225–Trp-229.

As to quaternary structure, interacts (via RVxF motif) with PPP1CC. As to expression, expressed in testis, specifically in spermatocytes and round spermatids.

The protein resides in the cytoplasmic vesicle. It is found in the secretory vesicle. The protein localises to the acrosome membrane. Its function is as follows. Probably inhibits protein phosphatase 1 (PP1) in sperm via binding to catalytic subunit PPP1CC. The polypeptide is Transmembrane protein 225 (Tmem225) (Rattus norvegicus (Rat)).